The chain runs to 270 residues: 4-hydroxy-tetrahydrodipicolinate reductase (270 aa).

7-12 (GANGKM) provides a ligand contact to NAD(+). Position 34 (Arg34) interacts with NADP(+). NAD(+) is bound by residues 97–99 (GTT) and 121–124 (SGNM). His155 serves as the catalytic Proton donor/acceptor. Position 156 (His156) interacts with (S)-2,3,4,5-tetrahydrodipicolinate. Lys159 functions as the Proton donor in the catalytic mechanism. 165 to 166 (GT) serves as a coordination point for (S)-2,3,4,5-tetrahydrodipicolinate.

The protein belongs to the DapB family.

Its subcellular location is the cytoplasm. The enzyme catalyses (S)-2,3,4,5-tetrahydrodipicolinate + NAD(+) + H2O = (2S,4S)-4-hydroxy-2,3,4,5-tetrahydrodipicolinate + NADH + H(+). It carries out the reaction (S)-2,3,4,5-tetrahydrodipicolinate + NADP(+) + H2O = (2S,4S)-4-hydroxy-2,3,4,5-tetrahydrodipicolinate + NADPH + H(+). Its pathway is amino-acid biosynthesis; L-lysine biosynthesis via DAP pathway; (S)-tetrahydrodipicolinate from L-aspartate: step 4/4. Catalyzes the conversion of 4-hydroxy-tetrahydrodipicolinate (HTPA) to tetrahydrodipicolinate. The chain is 4-hydroxy-tetrahydrodipicolinate reductase from Bartonella quintana (strain Toulouse) (Rochalimaea quintana).